A 576-amino-acid chain; its full sequence is MSTSSLRRQMKNIVHNYSEAEIKVREATSNDPWGPSSSLMSEIADLTYNVVAFSEIMSMIWKRLNDHGKNWRHVYKAMTLMEYLIKTGSERVSQQCKENMYAVQTLKDFQYVDRDGKDQGVNVREKAKQLVALLRDEDRLREERAHALKTKEKLAQTATASSAAVGSGPPPEAEQAWPQSSGEEELQLQLALAMSKEEADQPPSCGPEDDAQLQLALSLSREEHDKEERIRRGDDLRLQMAIEESKRETGGKEESSLMDLADVFTAPAPAPTTDPWGGPAPMAAAVPTAAPTSDPWGGPPVPPAADPWGGPAPTPASGDPWRPAAPAGPSVDPWGGTPAPAAGEGPTPDPWGSSDGGVPVSGPSASDPWTPAPAFSDPWGGSPAKPSTNGTTAAGGFDTEPDEFSDFDRLRTALPTSGSSAGELELLAGEVPARSPGAFDMSGVRGSLAEAVGSPPPAATPTPTPPTRKTPESFLGPNAALVDLDSLVSRPGPTPPGAKASNPFLPGGGPATGPSVTNPFQPAPPATLTLNQLRLSPVPPVPGAPPTYISPLGGGPGLPPMMPPGPPAPNTNPFLL.

A 1,2-diacyl-sn-glycero-3-phospho-(1D-myo-inositol-4,5-bisphosphate) contacts are provided by R8, K11, R25, N30, R63, and H73. Positions 12-144 (NIVHNYSEAE…RDEDRLREER (133 aa)) constitute an ENTH domain. The interval 149-185 (KTKEKLAQTATASSAAVGSGPPPEAEQAWPQSSGEEE) is disordered. Positions 157 to 167 (TATASSAAVGS) are enriched in low complexity. 3 UIM domains span residues 183–202 (EEELQLQLALAMSKEEADQP), 208–227 (EDDAQLQLALSLSREEHDKE), and 233–252 (GDDLRLQMAIEESKRETGGK). Residues 265-296 (TAPAPAPTTDPWGGPAPMAAAVPTAAPTSDPW) are compositionally biased toward low complexity. The segment at 265-404 (TAPAPAPTTD…GGFDTEPDEF (140 aa)) is disordered. A run of 8 repeats spans residues 274 to 276 (DPW), 294 to 296 (DPW), 306 to 308 (DPW), 319 to 321 (DPW), 332 to 334 (DPW), 349 to 351 (DPW), 367 to 369 (DPW), and 377 to 379 (DPW). An 8 X 3 AA repeats of [ED]-P-W region spans residues 274–379 (DPWGGPAPMA…TPAPAFSDPW (106 aa)). Pro residues predominate over residues 297–314 (GGPPVPPAADPWGGPAPT). Residues 332 to 368 (DPWGGTPAPAAGEGPTPDPWGSSDGGVPVSGPSASDP) show a composition bias toward low complexity. Residue S382 is modified to Phosphoserine; by CDK1. The short motif at 402–411 (DEFSDFDRLR) is the [DE]-X(1,2)-F-X-X-[FL]-X-X-X-R motif element. 5 positions are modified to phosphoserine: S419, S420, S435, S447, and S454. Residues 448–576 (LAEAVGSPPP…PAPNTNPFLL (129 aa)) are disordered. Positions 454–468 (SPPPAATPTPTPPTR) are enriched in pro residues. T460, T464, and T470 each carry phosphothreonine. Phosphoserine is present on S473. T494 is modified (phosphothreonine). Tandem repeats lie at residues 502-504 (NPF) and 518-520 (NPF). The tract at residues 502 to 574 (NPFLPGGGPA…GPPAPNTNPF (73 aa)) is 3 X 3 AA repeats of N-P-F. R534 is subject to Omega-N-methylarginine. The span at 557-570 (GLPPMMPPGPPAPN) shows a compositional bias: pro residues. The stretch at 572 to 574 (NPF) is repeat 3.

It belongs to the epsin family. Monomer. Binds clathrin, ZBTB16/ZNF145 and ITSN1. Binds ubiquitinated proteins. Binds AP2A1 and AP2A2. Interacts with RALBP1 in a complex also containing NUMB and TFAP2A during interphase and mitosis. Interacts with AP2B1. Interacts with UBQLN2. Interacts with REPS2; the interaction is direct. Interacts with EPS15; the interaction is direct. Interacts with ENTREP1. Phosphorylated on serine and/or threonine residues in mitotic cells. Phosphorylation reduces interaction with REPS2, AP-2 and the membrane fraction. Depolarization of synaptosomes results in dephosphorylation. In terms of processing, ubiquitinated.

The protein resides in the cytoplasm. It localises to the cell membrane. It is found in the nucleus. Its subcellular location is the membrane. The protein localises to the clathrin-coated pit. Functionally, binds to membranes enriched in phosphatidylinositol 4,5-bisphosphate (PtdIns(4,5)P2). Modifies membrane curvature and facilitates the formation of clathrin-coated invaginations. Regulates receptor-mediated endocytosis. This is Epsin-1 (EPN1) from Homo sapiens (Human).